The primary structure comprises 156 residues: ADKAASGVLTKLPQKQIQEMKEAFTMIDQNRDGFIDINDLKEMFSSLGRTPDDKELTAMLKEAPGPLNFTMFLSIFSDKLSGTDTEETLRNAFAMFDELDTKKLNIEYIKDLLENMGDNFTKDEMRMTFKEAPVTGGKFDYVKFTAMIKGSGEEEA.

Position 1 is a blocked amino end (Ala) (Ala-1). 2 consecutive EF-hand domains span residues 15–50 (KQIQ…LGRT) and 84–119 (DTEE…MGDN). Ca(2+) is bound by residues Asp-28, Asn-30, Asp-32, and Asp-39.

In molluscan muscle, calcium regulation is associated with myosin rather than with actin. Muscle myosin contains two types of light chains: the catalytic light chain, essential for ATPase activity, and the regulatory light chain, a calcium-binding protein responsible for Ca(2+) dependent binding and Ca(2+) dependent Mg-ATPase activity. The polypeptide is Myosin regulatory light chain B, smooth adductor muscle (Mizuhopecten yessoensis (Japanese scallop)).